Here is a 585-residue protein sequence, read N- to C-terminus: Probable monoterpene synthase MTS1, chloroplastic (585 aa).

A disordered region spans residues 1–29 (MSLSGVPLSAGLAPSPSNKPTNGKGQNIV). The transit peptide at 1–31 (MSLSGVPLSAGLAPSPSNKPTNGKGQNIVRR) directs the protein to the chloroplast. Polar residues predominate over residues 15–25 (SPSNKPTNGKG). R298, D335, D339, R476, and D479 together coordinate (2E)-geranyl diphosphate. The Mg(2+) site is built by D335 and D339. Positions 335 to 339 (DDIYD) match the DDXXD motif motif. Mg(2+) is bound by residues D479, T483, and E487.

It belongs to the terpene synthase family. Tpsb subfamily. Mg(2+) serves as cofactor. Mn(2+) is required as a cofactor. In terms of tissue distribution, expressed in trichomes. Detected in flowers, but not in leaves.

The protein resides in the plastid. Its subcellular location is the chloroplast. The polypeptide is Probable monoterpene synthase MTS1, chloroplastic (Humulus lupulus (European hop)).